The chain runs to 261 residues: Guanine nucleotide exchange factor BopE (261 aa).

Belongs to the GEF (guanine exchange factor) SopE family. As to quaternary structure, monomer. Interacts with human CDC42.

It localises to the secreted. In terms of biological role, activator for both CDC42 and RAC1 by directly interacting with these Rho GTPases and acting as a guanine nucleotide exchange factor (GEF). This activation results in actin cytoskeleton rearrangements and stimulates membrane ruffling, thus promoting bacterial entry into non-phagocytic cells. This is Guanine nucleotide exchange factor BopE (bopE) from Burkholderia mallei (strain NCTC 10247).